The sequence spans 154 residues: Cyanate hydratase (154 aa).

Catalysis depends on residues R100, E103, and S126.

The protein belongs to the cyanase family.

The catalysed reaction is cyanate + hydrogencarbonate + 3 H(+) = NH4(+) + 2 CO2. Functionally, catalyzes the reaction of cyanate with bicarbonate to produce ammonia and carbon dioxide. The protein is Cyanate hydratase of Aspergillus terreus (strain NIH 2624 / FGSC A1156).